A 158-amino-acid polypeptide reads, in one-letter code: SsrA-binding protein (158 aa).

The protein belongs to the SmpB family.

It is found in the cytoplasm. Functionally, required for rescue of stalled ribosomes mediated by trans-translation. Binds to transfer-messenger RNA (tmRNA), required for stable association of tmRNA with ribosomes. tmRNA and SmpB together mimic tRNA shape, replacing the anticodon stem-loop with SmpB. tmRNA is encoded by the ssrA gene; the 2 termini fold to resemble tRNA(Ala) and it encodes a 'tag peptide', a short internal open reading frame. During trans-translation Ala-aminoacylated tmRNA acts like a tRNA, entering the A-site of stalled ribosomes, displacing the stalled mRNA. The ribosome then switches to translate the ORF on the tmRNA; the nascent peptide is terminated with the 'tag peptide' encoded by the tmRNA and targeted for degradation. The ribosome is freed to recommence translation, which seems to be the essential function of trans-translation. This is SsrA-binding protein from Pseudoalteromonas atlantica (strain T6c / ATCC BAA-1087).